The primary structure comprises 175 residues: ATP synthase subunit b (175 aa).

A helical transmembrane segment spans residues 22–44 (MLVQLFFFLILLALLKKFAWGPL).

This sequence belongs to the ATPase B chain family. F-type ATPases have 2 components, F(1) - the catalytic core - and F(0) - the membrane proton channel. F(1) has five subunits: alpha(3), beta(3), gamma(1), delta(1), epsilon(1). F(0) has three main subunits: a(1), b(2) and c(10-14). The alpha and beta chains form an alternating ring which encloses part of the gamma chain. F(1) is attached to F(0) by a central stalk formed by the gamma and epsilon chains, while a peripheral stalk is formed by the delta and b chains.

It localises to the cell membrane. F(1)F(0) ATP synthase produces ATP from ADP in the presence of a proton or sodium gradient. F-type ATPases consist of two structural domains, F(1) containing the extramembraneous catalytic core and F(0) containing the membrane proton channel, linked together by a central stalk and a peripheral stalk. During catalysis, ATP synthesis in the catalytic domain of F(1) is coupled via a rotary mechanism of the central stalk subunits to proton translocation. Its function is as follows. Component of the F(0) channel, it forms part of the peripheral stalk, linking F(1) to F(0). The sequence is that of ATP synthase subunit b from Oceanobacillus iheyensis (strain DSM 14371 / CIP 107618 / JCM 11309 / KCTC 3954 / HTE831).